A 127-amino-acid polypeptide reads, in one-letter code: Major sperm protein 63 (127 aa).

N-acetylalanine is present on Ala2. The MSP domain occupies 9-126; it reads DIQTQPGTKI…RRKNLPIEYN (118 aa).

In terms of tissue distribution, sperm.

The protein resides in the cell projection. The protein localises to the pseudopodium. It localises to the cytoplasm. It is found in the cytoskeleton. Functionally, central component in molecular interactions underlying sperm crawling. Forms an extensive filament system that extends from sperm villipoda, along the leading edge of the pseudopod. This is Major sperm protein 63 (msp-63) from Caenorhabditis elegans.